Consider the following 911-residue polypeptide: Viral IRF4-like protein (911 aa).

The IRF tryptophan pentad repeat DNA-binding region spans 7 to 114 (SEWATLWIID…GSYVVWQLVR (108 aa)). Disordered regions lie at residues 147–184 (TTAT…PRKS), 211–302 (ASTS…SRLP), 494–537 (GGAP…PYVC), and 681–727 (ELQE…FFDP). A compositionally biased stretch (low complexity) spans 211–221 (ASTSGMGSSGT). 2 stretches are compositionally biased toward polar residues: residues 222 to 231 (RQVTQASSFT) and 495 to 505 (GAPNQGLSHTQ). Residues 697–710 (RRPRSRSPHGRRTP) are compositionally biased toward basic residues.

Belongs to the IRF family. As to quaternary structure, interacts with host MDM2; this interaction facilitates the proteasomal degradation of TP53/p53. Interacts with host IRF7; this interaction prevents IRF7 dimerization and subsequent activation.

It localises to the host nucleus. In terms of biological role, plays a role in host cell apoptosis modulation by promoting TP53/p53 ubiquitination and subsequent degradation and thus down-regulating TP53/p53-mediated apoptosis. Works as a potential viral transcription factor to modulate host gene expression to build favorable environments for the viral lytic life cycle and greatly accelerates the induction of an immediate early gene RTA, early genes ORF36 and ORF57, late genes ORF25 and ORF64, and latent genes LANA1 and v-IRF3. Inhibits host interferon-alpha production by interacting with host IRF7 and preventing IRF7 dimerization. This Homo sapiens (Human) protein is Viral IRF4-like protein (vIRF-4).